Here is a 370-residue protein sequence, read N- to C-terminus: tRNA 2-selenouridine synthase (370 aa).

The region spanning 12 to 136 (FLDDVPMMDM…MRTFLLETTQ (125 aa)) is the Rhodanese domain. The S-selanylcysteine intermediate role is filled by C95.

It belongs to the SelU family. In terms of assembly, monomer.

It carries out the reaction 5-methylaminomethyl-2-thiouridine(34) in tRNA + selenophosphate + (2E)-geranyl diphosphate + H2O + H(+) = 5-methylaminomethyl-2-selenouridine(34) in tRNA + (2E)-thiogeraniol + phosphate + diphosphate. The enzyme catalyses 5-methylaminomethyl-2-thiouridine(34) in tRNA + (2E)-geranyl diphosphate = 5-methylaminomethyl-S-(2E)-geranyl-thiouridine(34) in tRNA + diphosphate. It catalyses the reaction 5-methylaminomethyl-S-(2E)-geranyl-thiouridine(34) in tRNA + selenophosphate + H(+) = 5-methylaminomethyl-2-(Se-phospho)selenouridine(34) in tRNA + (2E)-thiogeraniol. The catalysed reaction is 5-methylaminomethyl-2-(Se-phospho)selenouridine(34) in tRNA + H2O = 5-methylaminomethyl-2-selenouridine(34) in tRNA + phosphate. Functionally, involved in the post-transcriptional modification of the uridine at the wobble position (U34) of tRNA(Lys), tRNA(Glu) and tRNA(Gln). Catalyzes the conversion of 2-thiouridine (S2U-RNA) to 2-selenouridine (Se2U-RNA). Acts in a two-step process involving geranylation of 2-thiouridine (S2U) to S-geranyl-2-thiouridine (geS2U) and subsequent selenation of the latter derivative to 2-selenouridine (Se2U) in the tRNA chain. The chain is tRNA 2-selenouridine synthase from Pseudomonas putida (strain ATCC 47054 / DSM 6125 / CFBP 8728 / NCIMB 11950 / KT2440).